The chain runs to 20 residues: 26 kDa protein (20 aa).

The protein is 26 kDa protein of Bacillus cereus.